Consider the following 454-residue polypeptide: Repulsive guidance molecule A (454 aa).

The N-terminal stretch at 1 to 47 (MQPPRERLVVTGRAGWMGMGRGAGRSALGLWPTLAFLLCSFPAAISP) is a signal peptide. Residues 48-169 (CKILKCNSEF…NYTHCGLFGD (122 aa)) constitute a propeptide, removed in mature form. A compositionally biased stretch (polar residues) spans 114–126 (HNCSKDGPTSQPR). Positions 114 to 141 (HNCSKDGPTSQPRVRTLPPAGDSQERSD) are disordered. 2 N-linked (GlcNAc...) asparagine glycosylation sites follow: N115 and N160. 2 disulfide bridges follow: C146–C227 and C164–C316. Residue N388 is glycosylated (N-linked (GlcNAc...) asparagine). A427 carries the GPI-anchor amidated alanine lipid modification. Positions 428–454 (AAATTFPLAPQILLGTIPLLVLLPVLW) are cleaved as a propeptide — removed in mature form.

The protein belongs to the repulsive guidance molecule (RGM) family. In terms of assembly, interacts with NEO1, BMP2 and BMP4. Post-translationally, autocatalytically cleaved at low pH; the two chains remain linked via two disulfide bonds. As to expression, expressed in gradient in periventricular layers of the developing nervous system. In adult, expressed in scattered cells throughout the brain.

The protein resides in the cell membrane. In terms of biological role, member of the repulsive guidance molecule (RGM) family that performs several functions in the developing and adult nervous system. Regulates cephalic neural tube closure, inhibits neurite outgrowth and cortical neuron branching, and the formation of mature synapses. Binding to its receptor NEO1/neogenin induces activation of RHOA-ROCK1/Rho-kinase signaling pathway through UNC5B-ARHGEF12/LARG-PTK2/FAK1 cascade, leading to collapse of the neuronal growth cone and neurite outgrowth inhibition. Furthermore, RGMA binding to NEO1/neogenin leads to HRAS inactivation by influencing HRAS-PTK2/FAK1-AKT1 pathway. It also functions as a bone morphogenetic protein (BMP) coreceptor that may signal through SMAD1, SMAD5, and SMAD8. This is Repulsive guidance molecule A (Rgma) from Mus musculus (Mouse).